The primary structure comprises 951 residues: Cation channel sperm-associated auxiliary subunit epsilon (951 aa).

Residues 1 to 19 (MSAREVAVLLLWLSCYGSA) form the signal peptide. Topologically, residues 20–903 (LWRYSTNSPN…ETFGLIPSPS (884 aa)) are extracellular. Intrachain disulfides connect Cys57–Cys71, Cys101–Cys206, Cys246–Cys336, and Cys410–Cys413. Residues Asn61 and Asn114 are each glycosylated (N-linked (GlcNAc...) asparagine). N-linked (GlcNAc...) asparagine glycosylation is found at Asn414, Asn472, Asn487, Asn493, and Asn535. Disulfide bonds link Cys583–Cys690, Cys703–Cys885, Cys719–Cys752, and Cys804–Cys835. Asn796 is a glycosylation site (N-linked (GlcNAc...) asparagine). Asn854, Asn881, and Asn886 each carry an N-linked (GlcNAc...) asparagine glycan. Residues 904–924 (VYLVASFLFVLMLLFFTILVL) form a helical membrane-spanning segment. The Cytoplasmic segment spans residues 925 to 951 (SYFRYMRIYRRYIYEPLHKPQRKRKKN).

Belongs to the CATSPERD family. In terms of assembly, component of the CatSper complex or CatSpermasome composed of the core pore-forming members CATSPER1, CATSPER2, CATSPER3 and CATSPER4 as well as auxiliary members CATSPERB, CATSPERG, CATSPERD, CATSPERE, CATSPERZ, C2CD6/CATSPERT, TMEM249, TMEM262 and EFCAB9. HSPA1 may be an additional auxiliary complex member. The core complex members CATSPER1, CATSPER2, CATSPER3 and CATSPER4 form a heterotetrameric channel. The auxiliary CATSPERB, CATSPERG, CATSPERD and CATSPERE subunits form a pavilion-like structure over the pore which stabilizes the complex through interactions with CATSPER4, CATSPER3, CATSPER1 and CATSPER2 respectively. TMEM262/CATSPERH interacts with CATSPERB, further stabilizing the complex. C2CD6/CATSPERT interacts at least with CATSPERD and is required for targeting the CatSper complex in the flagellar membrane.

The protein resides in the cell projection. The protein localises to the cilium. It is found in the flagellum membrane. Auxiliary component of the CatSper complex, a complex involved in sperm cell hyperactivation. Sperm cell hyperactivation is needed for sperm motility which is essential late in the preparation of sperm for fertilization. This is Cation channel sperm-associated auxiliary subunit epsilon from Homo sapiens (Human).